A 147-amino-acid polypeptide reads, in one-letter code: MKEETFYLVREDVLPDAMRKTLEVKKLLDRKKADSVADAVQQADLSRSAFYKYRDAVFPFYTMVKEQIITLFFHLEDRSGALSRLLQIVADSGCNVLSIHQTIPLQGRANVTLSISTAGMADDINTVMNQLRKLEFVEKVEILGSGA.

The ACT domain maps to 70–145 (TLFFHLEDRS…FVEKVEILGS (76 aa)).

This sequence belongs to the UPF0735 family.

This is UPF0735 ACT domain-containing protein BPUM_2431 from Bacillus pumilus (strain SAFR-032).